We begin with the raw amino-acid sequence, 908 residues long: WD repeat-containing protein 44 (908 aa).

Residues 1–163 (MMPLKMCTWG…SSADQLDASK (163 aa)) form a binding activity region. 6 positions are modified to phosphoserine: Ser17, Ser40, Ser61, Ser71, Ser86, and Ser116. Polar residues-rich tracts occupy residues 108–120 (QQGS…QNAA) and 148–157 (NNLTEVSSAD). Disordered regions lie at residues 108-158 (QQGS…SADQ), 202-273 (APAK…KDNI), 309-341 (TAQE…RELT), 391-418 (VSND…RLKQ), and 454-474 (DEVF…GMPY). Residues Thr151 and Thr211 each carry the phosphothreonine modification. The important for interaction with ARHGAP26 AND ARHGAP10 stretch occupies residues 203-249 (PAKPPRHLTPEPDIVASTKKPVPARPPPPTNFPPPRPPPPSRPAPPP). Residues 225 to 248 (PARPPPPTNFPPPRPPPPSRPAPP) show a composition bias toward pro residues. Phosphoserine is present on Ser254. Over residues 254–270 (SDLEFEALKTPDLDVPK) the composition is skewed to basic and acidic residues. The residue at position 263 (Thr263) is a Phosphothreonine. The tract at residues 326 to 339 (VMGPQRPRSNSGRE) is important for interaction with RAB11A. Phosphoserine occurs at positions 334 and 336. 2 positions are modified to phosphothreonine: Thr341 and Thr396. Ser398, Ser465, Ser466, and Ser467 each carry phosphoserine. Residues 462–471 (DDPSSSDDEG) show a composition bias toward acidic residues. Tyr474 carries the post-translational modification Phosphotyrosine. The stretch at 504–543 (EHMGAVWTMKFSHCGRLLASAGQDNIVRIWALKNAFDYFN) is one WD 1 repeat. The segment at 552-587 (EGRVSPSPSQESLSSSKSDTDMGVCSGTDEDPDDKN) is disordered. Phosphoserine occurs at positions 556 and 560. Residues 556–568 (SPSPSQESLSSSK) are compositionally biased toward low complexity. 5 WD repeats span residues 600-638 (GHTA…CLCC), 640-680 (QHID…VALW), 685-724 (GQTK…YHTQ), 735-774 (KVGR…LSMK), and 779-818 (VNSS…SKFT).

In terms of assembly, interacts preferentially with the GTP-bound form of RAB11 when membrane-associated. Interacts with GRAF1/ARHGAP26 or GRAF2/ARHGAP10; the interaction connects the endoplasmic reticulum (ER) with the endosomal tubule. Interacts with VAPA (via MSP domain) or VAPB (via MSP domain); the interaction connects the ER with the endosomal tubule. Does not bind to other Rab and Rho small G proteins. Post-translationally, phosphorylated by ATK1; the phosphorylation stabilizes its interaction with RAB11A and RAB11B. As to expression, expressed in heart; brain; spleen; lung; liver; muscle and kidney.

It is found in the cytoplasm. The protein resides in the cytosol. The protein localises to the perinuclear region. It localises to the endosome membrane. Its subcellular location is the golgi apparatus. It is found in the trans-Golgi network. Functionally, downstream effector for Rab11 which regulates Rab11 intracellular membrane trafficking functions such as endocytic recycling, intracellular ciliogenesis and protein export. ATK1-mediated phosphorylation of WDR44 induces binding to Rab11 which activates endocytic recycling of transferrin receptor back to the plasma membrane. When bound to Rab11, prevents the formation of the ciliogenic Rab11-Rabin8/RAB3IP-RAB11FIP3 complex, therefore inhibiting preciliary trafficking and ciliogenesis. May participate in neo-synthesized protein export by connecting the endoplasmic reticulum (ER) with the endosomal tubule via direct interactions with the integral ER proteins VAPA or VAPB and the endosomal protein GRAFs (GRAF1/ARHGAP26 or GRAF2/ARHGAP10), which facilitates the transfer of proteins such as E-cadherin, MPP14 and CFTR into a Rab8-Rab10-Rab11-dependent export route. The chain is WD repeat-containing protein 44 from Rattus norvegicus (Rat).